Reading from the N-terminus, the 456-residue chain is Cell adhesion molecule 1 (456 aa).

Residues 1–47 (MASAVLPSGSQCAAAAAVAAAAAPPGLRLRLLLLLLSAAALIPTGDG) form the signal peptide. Residues 48–142 (QNLFTKDVTV…PPQESYTTIT (95 aa)) enclose the Ig-like V-type domain. Residues 48–388 (QNLFTKDVTV…EEGTIGAVDH (341 aa)) are Extracellular-facing. Cys-67 and Cys-127 are joined by a disulfide. Asn-70, Asn-104, Asn-116, and Asn-168 each carry an N-linked (GlcNAc...) asparagine glycan. Ig-like C2-type domains lie at 147-241 (PRNL…RYLE) and 246-332 (PQVH…YMLY). 2 disulfide bridges follow: Cys-169–Cys-223 and Cys-270–Cys-316. 2 N-linked (GlcNAc...) asparagine glycosylation sites follow: Asn-307 and Asn-311. A helical membrane pass occupies residues 389-409 (AVIGGVVAVVVFAMLCLLIIL). Residues 410–456 (GRYFARHKGTYFTHEAKGADDAADADTAIINAEGGQNNSEEKKEYFI) lie on the Cytoplasmic side of the membrane. At Thr-436 the chain carries Phosphothreonine. Ser-448 is subject to Phosphoserine.

It belongs to the nectin family. In terms of assembly, homodimer (via Ig-like V-type domain). Interacts with FARP1. Interacts (via Ig-like V-type domain) with CRTAM (via Ig-like V-type domain); the interaction competes with CRTAM homodimerization and CADM1 homodimerization. Interacts (via C-terminus) with EPB41L3/DAL1. The interaction with EPB41L3/DAL1 may act to anchor CADM1 to the actin cytoskeleton. Interacts (via C-terminus) with MPP2 (via PDZ domain). Interacts (via C-terminus) with MPP3 (via PDZ domain); this interaction connects CADM1 with DLG1. Interacts (via C-terminus) with PALS2 (via PDZ domain). In terms of processing, N-glycosylated. Post-translationally, glycosylation at Asn-70 and Asn-104 promotes adhesive binding and synapse induction. As to expression, expressed dominantly in epithelial cells but not expressed in fibroblast cells (at protein level). Expressed in the T-cell area of lymph nodes, specifically in CD8+ and CD4- CD8- dendritic cells (at protein level). Expressed in CD8+ dendritic cells in the spleen (at protein level). Expressed in CD103+ dendritic cells in the small intestine lamina propria and mesenteric lymph nodes (at protein level). Expressed in brain, lung, kidney, testis, heart, spleen and liver, but not expressed in skeletal muscle.

It is found in the cell membrane. Its subcellular location is the synaptic cell membrane. Functionally, mediates homophilic cell-cell adhesion in a Ca(2+)-independent manner. Also mediates heterophilic cell-cell adhesion with CADM3 and NECTIN3 in a Ca(2+)-independent manner. Interaction with CRTAM promotes natural killer (NK) cell cytotoxicity and interferon-gamma (IFN-gamma) secretion by CD8+ T-cells in vitro as well as NK cell-mediated rejection of tumors expressing CADM1 in vivo. In mast cells, may mediate attachment to and promote communication with nerves. CADM1, together with MITF, is essential for development and survival of mast cells in vivo. By interacting with CRTAM and thus promoting the adhesion between CD8+ T-cells and CD8+ dendritic cells, regulates the retention of activated CD8+ T-cell within the draining lymph node. Required for the intestinal retention of intraepithelial CD4+ CD8+ T-cells and, to a lesser extent, intraepithelial and lamina propria CD8+ T-cells and CD4+ T-cells. Interaction with CRTAM promotes the adhesion to gut-associated CD103+ dendritic cells, which may facilitate the expression of gut-homing and adhesion molecules on T-cells and the conversion of CD4+ T-cells into CD4+ CD8+ T-cells. Acts as a synaptic cell adhesion molecule and plays a role in the formation of dendritic spines and in synapse assembly. May be involved in neuronal migration, axon growth, pathfinding, and fasciculation on the axons of differentiating neurons. May play diverse roles in the spermatogenesis including in the adhesion of spermatocytes and spermatids to Sertoli cells and for their normal differentiation into mature spermatozoa. In Mus musculus (Mouse), this protein is Cell adhesion molecule 1.